Reading from the N-terminus, the 201-residue chain is Recombination protein RecR (201 aa).

The C4-type zinc finger occupies C60–C75. The Toprim domain maps to K83–P177.

Belongs to the RecR family.

May play a role in DNA repair. It seems to be involved in an RecBC-independent recombinational process of DNA repair. It may act with RecF and RecO. This is Recombination protein RecR from Prochlorococcus marinus (strain MIT 9215).